The primary structure comprises 273 residues: Protein ALUMINUM SENSITIVE 3 (273 aa).

7 helical membrane-spanning segments follow: residues 14 to 34 (WLIVFLKGMVKPAAALVVVLL), 51 to 71 (IYSVSRSFLQLSVIGFVLQFI), 76 to 96 (NSGWIILAYLFMVSVAGYTAG), 107 to 127 (YVAGLSILAGTSITMFLLVLL), 136 to 156 (YMIPIAGMLVGNAMTVTGVTM), 191 to 213 (ALVISLSPVLDSCKTVGLISLPG), and 228 to 248 (AIQLQIVVMNMMVGAATVSSI).

The protein belongs to the UPF0014 family. Expressed in roots, leaves, stems, and flowers.

Its subcellular location is the cell membrane. Its function is as follows. Required for aluminum (Al) resistance/tolerance, probably by translocating Al from sensitive tissues such as growing roots to tissues less sensisitive to the toxic effects of Al. This is Protein ALUMINUM SENSITIVE 3 (ALS3) from Arabidopsis thaliana (Mouse-ear cress).